The primary structure comprises 360 residues: Plastid lipid-associated protein 3, chloroplastic (360 aa).

Positions 1 to 37 (MATLFTVTTTSRPFPANPSKTFSPSISLKPNALSFSL) are enriched in polar residues. The transit peptide at 1 to 52 (MATLFTVTTTSRPFPANPSKTFSPSISLKPNALSFSLTHHRPPRPLRFSKIR) directs the protein to the chloroplast. The tract at residues 1–130 (MATLFTVTTT…EWEEREADDG (130 aa)) is disordered. Residues 38 to 50 (THHRPPRPLRFSK) show a composition bias toward basic residues. Over residues 53–68 (SSLPSESDSEPEGGYS) the composition is skewed to low complexity. A compositionally biased stretch (acidic residues) spans 117–127 (TNEDEWEEREA).

It belongs to the PAP/fibrillin family. As to expression, ubiquitous expression among various organs, but only at a very low level.

It is found in the plastid. Its subcellular location is the chloroplast. The chain is Plastid lipid-associated protein 3, chloroplastic (PAP3) from Brassica campestris (Field mustard).